Consider the following 318-residue polypeptide: Acetyl-coenzyme A carboxylase carboxyl transferase subunit alpha (318 aa).

The 262-residue stretch at 34–295 folds into the CoA carboxyltransferase C-terminal domain; sequence SIEEEITKLR…KATIKQQLAQ (262 aa).

It belongs to the AccA family. Acetyl-CoA carboxylase is a heterohexamer composed of biotin carboxyl carrier protein (AccB), biotin carboxylase (AccC) and two subunits each of ACCase subunit alpha (AccA) and ACCase subunit beta (AccD).

The protein resides in the cytoplasm. The catalysed reaction is N(6)-carboxybiotinyl-L-lysyl-[protein] + acetyl-CoA = N(6)-biotinyl-L-lysyl-[protein] + malonyl-CoA. It participates in lipid metabolism; malonyl-CoA biosynthesis; malonyl-CoA from acetyl-CoA: step 1/1. Component of the acetyl coenzyme A carboxylase (ACC) complex. First, biotin carboxylase catalyzes the carboxylation of biotin on its carrier protein (BCCP) and then the CO(2) group is transferred by the carboxyltransferase to acetyl-CoA to form malonyl-CoA. The sequence is that of Acetyl-coenzyme A carboxylase carboxyl transferase subunit alpha from Pseudoalteromonas atlantica (strain T6c / ATCC BAA-1087).